The sequence spans 145 residues: Basic phospholipase A2 cL038 (145 aa).

The first 21 residues, 1-21 (MYPAHLLVLLAVCVSLLGASA), serve as a signal peptide directing secretion. The propeptide occupies 22–27 (IPPLPL). 7 cysteine pairs are disulfide-bonded: Cys-38-Cys-98, Cys-54-Cys-144, Cys-56-Cys-72, Cys-71-Cys-125, Cys-78-Cys-118, Cys-87-Cys-111, and Cys-105-Cys-116. Residues Tyr-55, Gly-57, and Gly-59 each contribute to the Ca(2+) site. Residue His-75 is part of the active site. Asp-76 provides a ligand contact to Ca(2+). Residue Asp-119 is part of the active site.

This sequence belongs to the phospholipase A2 family. Group I subfamily. D49 sub-subfamily. Requires Ca(2+) as cofactor. In terms of tissue distribution, expressed by the venom gland.

It is found in the secreted. The enzyme catalyses a 1,2-diacyl-sn-glycero-3-phosphocholine + H2O = a 1-acyl-sn-glycero-3-phosphocholine + a fatty acid + H(+). PLA2 catalyzes the calcium-dependent hydrolysis of the 2-acyl groups in 3-sn-phosphoglycerides. The protein is Basic phospholipase A2 cL038 of Laticauda semifasciata (Black-banded sea krait).